A 217-amino-acid polypeptide reads, in one-letter code: 2-phospho-L-lactate guanylyltransferase (217 aa).

The protein belongs to the CofC family. In terms of assembly, homodimer.

It catalyses the reaction (2S)-2-phospholactate + GTP + H(+) = (2S)-lactyl-2-diphospho-5'-guanosine + diphosphate. It functions in the pathway cofactor biosynthesis; coenzyme F420 biosynthesis. In terms of biological role, guanylyltransferase that catalyzes the activation of (2S)-2-phospholactate (2-PL) as (2S)-lactyl-2-diphospho-5'-guanosine, via the condensation of 2-PL with GTP. It is involved in the biosynthesis of coenzyme F420, a hydride carrier cofactor. The protein is 2-phospho-L-lactate guanylyltransferase of Methanospirillum hungatei JF-1 (strain ATCC 27890 / DSM 864 / NBRC 100397 / JF-1).